Here is a 121-residue protein sequence, read N- to C-terminus: Parathyroid hormone-related protein (121 aa).

The signal sequence occupies residues 1–14; sequence VGVFLLSYSVPSCG. The propeptide occupies 15–24; the sequence is RSVEELGRRL. Residues 47–58 form an important for receptor binding region; the sequence is RFFLHHLIAEIH. Residues 61-121 form a disordered region; it reads EIRATSEVSP…PGKKKKGKPG (61 aa). Over residues 66 to 80 the composition is skewed to polar residues; that stretch reads SEVSPNSKPAPNTKN. The Nuclear localization signal signature appears at 98 to 119; the sequence is TNKVETYKEQPLKTPGKKKKGK. A compositionally biased stretch (basic and acidic residues) spans 99 to 108; the sequence is NKVETYKEQP. Residues 112–121 are compositionally biased toward basic residues; sequence PGKKKKGKPG.

The protein belongs to the parathyroid hormone family. PTHrP interacts with PTH1R (via N-terminal extracellular domain).

It localises to the secreted. Its subcellular location is the cytoplasm. It is found in the nucleus. In terms of biological role, neuroendocrine peptide which is a critical regulator of cellular and organ growth, development, migration, differentiation and survival and of epithelial calcium ion transport. Acts by binding to its receptor, PTH1R, activating G protein-coupled receptor signaling. Regulates endochondral bone development and epithelial-mesenchymal interactions during the formation of the mammary glands and teeth. Required for skeletal homeostasis. Promotes mammary mesenchyme differentiation and bud outgrowth by modulating mesenchymal cell responsiveness to BMPs. Up-regulates BMPR1A expression in the mammary mesenchyme and this increases the sensitivity of these cells to BMPs and allows them to respond to BMP4 in a paracrine and/or autocrine fashion. BMP4 signaling in the mesenchyme, in turn, triggers epithelial outgrowth and augments MSX2 expression, which causes the mammary mesenchyme to inhibit hair follicle formation within the nipple sheath. The sequence is that of Parathyroid hormone-related protein (PTHLH) from Ovis aries (Sheep).